The chain runs to 147 residues: uncharacterized protein (147 aa).

The next 2 helical transmembrane spans lie at 4–26 and 123–145; these read YLRV…FFWG and YALC…RAYF.

The protein localises to the cell membrane. This is an uncharacterized protein from Treponema pallidum (strain Nichols).